A 758-amino-acid polypeptide reads, in one-letter code: Vitamin K-dependent gamma-carboxylase (758 aa).

Residues 1–34 (MAVSARPARAPRGSDKVKKDKAAQTSGPRQGSRM) form a disordered region. Ala2 is modified (N-acetylalanine). Residues 2-60 (AVSARPARAPRGSDKVKKDKAAQTSGPRQGSRMGKLLGFEWTDVSSWERLVTLLNRPTD) lie on the Cytoplasmic side of the membrane. The span at 12–22 (RGSDKVKKDKA) shows a compositional bias: basic and acidic residues. The helical transmembrane segment at 61 to 81 (PAGLAVFRFLFGLMMVLDIPQ) threads the bilayer. Topologically, residues 82-113 (ERGLSSLDRRYLDGLEVCRFPLLDALQPLPLD) are lumenal. A disulfide bridge connects residues Cys99 and Cys450. A helical membrane pass occupies residues 114–134 (WMYLIYTIMFLGALGMMLGLC). The Cytoplasmic portion of the chain corresponds to 135 to 136 (YR). A helical transmembrane segment spans residues 137–157 (ISCVLFLLPYWYVFLLDKTSW). The Lumenal portion of the chain corresponds to 158 to 292 (NNHSYLYGLL…VSYFHCMNSQ (135 aa)). Residues 293–313 (LFSIGMFPYVMLASSPLFCSP) form a helical membrane-spanning segment. At 314–363 (EWPRKLVAHCPKKLQELLPLRTAPQPSTSCMYKRSRARGSQKPGLRHKLS) the chain is on the cytoplasmic side. Residues 364 to 384 (TAFTLLYLLEQLFLPYSHFLT) form a helical membrane-spanning segment. Residues 385–758 (QGYNNWTNGL…PDSHPVHSEF (374 aa)) lie on the Lumenal side of the membrane. Residues 727–758 (PFEPAGEPSPVNTDSSNPNPPEPDSHPVHSEF) form a disordered region. The segment covering 749 to 758 (PDSHPVHSEF) has biased composition (basic and acidic residues).

As to quaternary structure, monomer. May interact with CALU. Post-translationally, the N-terminus is blocked.

It is found in the endoplasmic reticulum membrane. It carries out the reaction 4-carboxy-L-glutamyl-[protein] + 2,3-epoxyphylloquinone + H2O + H(+) = phylloquinol + L-glutamyl-[protein] + CO2 + O2. Mediates the vitamin K-dependent carboxylation of glutamate residues to calcium-binding gamma-carboxyglutamate (Gla) residues with the concomitant conversion of the reduced hydroquinone form of vitamin K to vitamin K epoxide. Catalyzes gamma-carboxylation of various proteins, such as blood coagulation factors (F2, F7, F9 and F10), osteocalcin (BGLAP) or matrix Gla protein (MGP). This Bos taurus (Bovine) protein is Vitamin K-dependent gamma-carboxylase (GGCX).